The following is a 557-amino-acid chain: Ubiquitin C-terminal hydrolase 22 (557 aa).

The segment at 36–130 adopts a UBP-type; degenerate zinc-finger fold; it reads FRCFNDARIK…VSKQLFGLGM (95 aa). Zn(2+) contacts are provided by C56, C59, C69, C72, C77, H80, H84, and H91. Positions 177 to 531 constitute a USP domain; it reads RGLNNLGSTC…ECYMLFYAQE (355 aa). C186 serves as the catalytic Nucleophile. H491 (proton acceptor) is an active-site residue.

The protein belongs to the peptidase C19 family. As to quaternary structure, component of a deubiquitination module (DUB module) formed by ENY2, SGF11, and UBP22 in Arabidopsis. Interacts directly with SGF11, but not with ENY2.

The protein localises to the nucleus. It localises to the nucleoplasm. The catalysed reaction is Thiol-dependent hydrolysis of ester, thioester, amide, peptide and isopeptide bonds formed by the C-terminal Gly of ubiquitin (a 76-residue protein attached to proteins as an intracellular targeting signal).. Its function is as follows. Component of a deubiquitination module (DUB module) that specifically deubiquinates monoubiquinated histone H2B (H2Bub). Does not seem to be a component of the TREX-2 complex. Seems to act independently of the SAGA multiprotein complex. The DUB module is responsible for the major H2Bub deubiquitinase activity in Arabidopsis. The sequence is that of Ubiquitin C-terminal hydrolase 22 from Arabidopsis thaliana (Mouse-ear cress).